A 244-amino-acid chain; its full sequence is Venom nerve growth factor 2 (244 aa).

The N-terminal stretch at 1-18 (MSMLCYTLIIAFLIGTWA) is a signal peptide. The propeptide occupies 19–125 (APKSEDNVPL…TLNRNIRAKR (107 aa)). Basic and acidic residues predominate over residues 47–66 (GLKTSRNTDQRHPAPKKAED). The segment at 47–67 (GLKTSRNTDQRHPAPKKAEDQ) is disordered. Cystine bridges form between C139/C205, C181/C233, and C193/C235.

It belongs to the NGF-beta family. In terms of assembly, homodimer; non-covalently linked. Expressed by the venom gland.

The protein localises to the secreted. Nerve growth factor is important for the development and maintenance of the sympathetic and sensory nervous systems. It stimulates division and differentiation of sympathetic and embryonic sensory neurons as well as basal forebrain cholinergic neurons in the brain. Its relevance in the snake venom is not clear. However, it has been shown to inhibit metalloproteinase-dependent proteolysis of platelet glycoprotein Ib alpha, suggesting a metalloproteinase inhibition to prevent metalloprotease autodigestion and/or protection against prey proteases. Binds a lipid between the two protein chains in the homodimer. The lipid-bound form promotes histamine relase from mouse mast cells, contrary to the lipid-free form. The sequence is that of Venom nerve growth factor 2 from Tropidechis carinatus (Australian rough-scaled snake).